A 190-amino-acid chain; its full sequence is uncharacterized protein (190 aa).

Transmembrane regions (helical) follow at residues 15–35, 58–78, 94–114, and 148–168; these read LVMS…VLAI, FSSF…GVLI, FFSA…YFAF, and FLFF…SFFV.

The protein localises to the membrane. This is an uncharacterized protein from Saccharomyces cerevisiae (strain ATCC 204508 / S288c) (Baker's yeast).